The sequence spans 248 residues: Myelin protein P0 (248 aa).

The signal sequence occupies residues 1–29; that stretch reads MAPGAPSSSPSPILAVLLFSSLVLSPAQA. The Ig-like V-type domain maps to 30–143; that stretch reads IVVYTDREVH…DIVGKTSQVT (114 aa). The Extracellular portion of the chain corresponds to 30–153; it reads IVVYTDREVH…LYVFEKVPTR (124 aa). Cys50 and Cys127 are disulfide-bonded. Residue Asn122 is glycosylated (N-linked (GlcNAc...) (complex) asparagine). A helical membrane pass occupies residues 154–179; it reads YGVVLGAVIGGVLGVVLLLLLLFYVV. Over 180 to 248 the chain is Cytoplasmic; it reads RYCWLRRQAA…GLGESRKDKK (69 aa). The residue at position 210 (Ser210) is a Phosphoserine; by PKC. The tract at residues 224 to 248 is disordered; sequence DHSRSTKAVSEKKAKGLGESRKDKK. Phosphoserine occurs at positions 226 and 228. Ser233 and Ser243 each carry phosphoserine; by PKC.

The protein belongs to the myelin P0 protein family. Homodimer and homotetramer. N-glycosylated; contains sulfate-substituted glycan. As to expression, found only in peripheral nervous system Schwann cells.

The protein resides in the cell membrane. It is found in the myelin membrane. Functionally, is an adhesion molecule necessary for normal myelination in the peripheral nervous system. It mediates adhesion between adjacent myelin wraps and ultimately drives myelin compaction. In Homo sapiens (Human), this protein is Myelin protein P0 (MPZ).